Reading from the N-terminus, the 379-residue chain is Lipoyl synthase, mitochondrial (379 aa).

[4Fe-4S] cluster-binding residues include Cys94, Cys99, Cys105, Cys126, Cys130, Cys133, and Ser342. Positions 109–331 (GEDNGAATAT…EKEAMSMGFL (223 aa)) constitute a Radical SAM core domain.

Belongs to the radical SAM superfamily. Lipoyl synthase family. [4Fe-4S] cluster serves as cofactor.

It localises to the mitochondrion. The enzyme catalyses [[Fe-S] cluster scaffold protein carrying a second [4Fe-4S](2+) cluster] + N(6)-octanoyl-L-lysyl-[protein] + 2 oxidized [2Fe-2S]-[ferredoxin] + 2 S-adenosyl-L-methionine + 4 H(+) = [[Fe-S] cluster scaffold protein] + N(6)-[(R)-dihydrolipoyl]-L-lysyl-[protein] + 4 Fe(3+) + 2 hydrogen sulfide + 2 5'-deoxyadenosine + 2 L-methionine + 2 reduced [2Fe-2S]-[ferredoxin]. The protein operates within protein modification; protein lipoylation via endogenous pathway; protein N(6)-(lipoyl)lysine from octanoyl-[acyl-carrier-protein]: step 2/2. In terms of biological role, catalyzes the radical-mediated insertion of two sulfur atoms into the C-6 and C-8 positions of the octanoyl moiety bound to the lipoyl domains of lipoate-dependent enzymes, thereby converting the octanoylated domains into lipoylated derivatives. This chain is Lipoyl synthase, mitochondrial, found in Leishmania braziliensis.